The chain runs to 448 residues: MSKKLISIVDVKDYVGQEVTIGAWVANKSGKGKIAFVQLRDGSAFFQGVAFKPNFIEKYGEESGHEKFDVIKRLNQETSVYVTGIVKEDERSKFGYELDITDLEIIGESHEYPITPKEHGTDFLMDNRHLWLRSRKQMAVMQIRNAIIYATYEFFDQNGFIKFDSPILSENAAEDSTELFETDYFGKPAFLSQSGQLYLEAGAMALGRVFDFGPVFRAEKSKTRRHLTEFWMMDAEYSFLSHEESLDLQEAYVKALIQGVLDRAPQALDILERDVEALKRYITEPFKRVSYDDAITLLQEHEADEDTDYEHLEHGDDFGSPHETWISNYFGVPTFVVNYPASFKAFYMKPVPGNPERVLCADLLAPEGYGEIIGGSMREDNYDTLVAKMDELGMDKSEYDFYLDLRKYGSVPHGGFGIGIERMVTFVAGTKHIREAIPFPRMLHRIRP.

This sequence belongs to the class-II aminoacyl-tRNA synthetase family. As to quaternary structure, homodimer.

It localises to the cytoplasm. The enzyme catalyses tRNA(Asn) + L-asparagine + ATP = L-asparaginyl-tRNA(Asn) + AMP + diphosphate + H(+). The sequence is that of Asparagine--tRNA ligase from Streptococcus pyogenes serotype M4 (strain MGAS10750).